Consider the following 272-residue polypeptide: Hematopoietically-expressed homeobox protein hhex (272 aa).

The segment at residues arginine 137–lysine 196 is a DNA-binding region (homeobox). Residues cysteine 222–histidine 272 are disordered. The span at glutamate 250–isoleucine 261 shows a compositional bias: acidic residues.

First expressed in the dorsal endomesoderm of the gastrula stage embryo. The dorsal endomesoderm contributes to forming the embryonic liver, and expression continues in the liver throughout development. Also expressed in precursors of the developing thyroid gland, and beginning at the tailbud stage, expressed in the ventral region of the head. Also transiently expressed in the endothelial layer of developing vascular tissues of the embryo, beginning at the tailbud stages.

Its subcellular location is the nucleus. In terms of biological role, recognizes the DNA sequence 5'-ATTAA-3'. Transcriptional repressor. Regulates the differentiation of both endothelial and blood cells. Probably plays a role in the proliferation of vascular endothelial cells during blood vessel development. Establishes anterior identity at two levels; acts early to enhance canonical wnt-signaling by repressing expression of tle4, and acts later to inhibit nodal-signaling by directly targeting nodal/nr1 and nodal2/nr2. May play a role in liver development. Induces heart development. In Xenopus laevis (African clawed frog), this protein is Hematopoietically-expressed homeobox protein hhex.